The chain runs to 182 residues: Keratin, type II cytoskeletal 68 kDa, component IA (182 aa).

Positions 1–66 (DAEQHGEVAL…TLLEGEECRM (66 aa)) constitute an IF rod domain. The segment at 1 to 66 (DAEQHGEVAL…TLLEGEECRM (66 aa)) is coil 2B. The tract at residues 67-86 (SGECQSSVSIEMVHNTTSSS) is H2 subdomain. The segment at 67–182 (SGECQSSVSI…SQSQRSHHKL (116 aa)) is tail. Residues 87 to 162 (SGGSGALGGG…GSCAVSGVGG (76 aa)) are V2 subdomain. Gly residues predominate over residues 104-124 (GSGGLGSGSLGSGRLGSGGRG). The tract at residues 104 to 182 (GSGGLGSGSL…SQSQRSHHKL (79 aa)) is disordered. 2 stretches are compositionally biased toward low complexity: residues 144-158 (VRGSVSNSGGSCAVS) and 165-176 (SVRVTQSSSQSQ). Residues 163 to 182 (RGSVRVTQSSSQSQRSHHKL) are E2 subdomain.

It belongs to the intermediate filament family. As to quaternary structure, heterotetramer of two type I and two type II keratins.

In Bos taurus (Bovine), this protein is Keratin, type II cytoskeletal 68 kDa, component IA.